Reading from the N-terminus, the 367-residue chain is Heme A synthase (367 aa).

Helical transmembrane passes span 25–45 (ALRLWLGFVLLALFCLVLVGG), 111–131 (LIARGIGVIFALPLIFFWLTG), 139–159 (WPLVGILALGGLQGFIGWWMV), 174–194 (LATHLVMACLIFAGCMWIMRG), and 210–230 (GFAAAIAIFALFQIYLGALVA). Heme is bound at residue His-274. The next 3 helical transmembrane spans lie at 276–296 (IGAYTLFALTLINMVIALRAA), 305–325 (AVVLFSLVTLQAAIGIATLLM), and 327–347 (VPLHWGLLHQAGALVVFGFAV). Position 335 (His-335) interacts with heme.

The protein belongs to the COX15/CtaA family. Type 2 subfamily. Interacts with CtaB. Heme b is required as a cofactor.

It localises to the cell membrane. It catalyses the reaction Fe(II)-heme o + 2 A + H2O = Fe(II)-heme a + 2 AH2. It participates in porphyrin-containing compound metabolism; heme A biosynthesis; heme A from heme O: step 1/1. Its function is as follows. Catalyzes the conversion of heme O to heme A by two successive hydroxylations of the methyl group at C8. The first hydroxylation forms heme I, the second hydroxylation results in an unstable dihydroxymethyl group, which spontaneously dehydrates, resulting in the formyl group of heme A. The chain is Heme A synthase from Rhizobium etli (strain CIAT 652).